A 267-amino-acid polypeptide reads, in one-letter code: Putative ABC transporter permease protein MJ0413 (267 aa).

Helical transmembrane passes span 18 to 38 (VLKI…AIYI), 48 to 68 (EAVI…GSLI), 78 to 98 (VISG…LMGY), 115 to 135 (PIPP…GEMS), 136 to 156 (MIFI…ISGV), 188 to 208 (PSIL…VVAA), and 228 to 248 (LSRM…GLVL). The ABC transmembrane type-1 domain maps to 71-252 (TIISIKRVIS…LIGLVLDRGL (182 aa)).

The protein belongs to the binding-protein-dependent transport system permease family. CysTW subfamily.

It is found in the cell membrane. Its function is as follows. Probably part of a binding-protein-dependent transport system. Probably responsible for the translocation of the substrate across the membrane. In Methanocaldococcus jannaschii (strain ATCC 43067 / DSM 2661 / JAL-1 / JCM 10045 / NBRC 100440) (Methanococcus jannaschii), this protein is Putative ABC transporter permease protein MJ0413.